A 271-amino-acid chain; its full sequence is Collectin-11 (271 aa).

The N-terminal stretch at 1 to 25 is a signal peptide; it reads MVGEKLVAYMLVSVLGLALLRSVFG. Residues 44–103 form the Collagen-like domain; the sequence is GEAGEKGEKGAPGRPGRVGPTGEQGPPGDKGQKGSPGRYGKMGPTGPKGLKGDMGDPGPK. The segment at 46 to 112 is disordered; sequence AGEKGEKGAP…KGPNGEPGVP (67 aa). Residues 124 to 148 are a coiled coil; that stretch reads EMDIQVVQLTNELKFIKNAVAGIKE. In terms of domain architecture, C-type lectin spans 149 to 265; that stretch reads TDSKVYLLVK…CQLTMYFVCE (117 aa). Intrachain disulfides connect Cys-170–Cys-264 and Cys-242–Cys-256. Arg-200 contacts a carbohydrate. Residues Asp-207, Glu-211, Glu-232, Asn-234, Asn-235, Asp-238, Glu-240, and Asp-241 each coordinate Ca(2+). Glu-240 contacts a carbohydrate. Residues Glu-244 and 252–254 each bind a carbohydrate; that span reads IDV. Asp-253 provides a ligand contact to Ca(2+).

The protein belongs to the COLEC10/COLEC11 family. As to quaternary structure, homotrimer; disulfide-linked. Interacts with MASP1; probably triggers the lectin pathway of complement.

It localises to the secreted. Lectin that plays a role in innate immunity, apoptosis and embryogenesis. Calcium-dependent lectin that binds self and non-self glycoproteins presenting high mannose oligosaccharides with at least one terminal alpha-1,2-linked mannose epitope. Primarily recognizes the terminal disaccharide of the glycan. Also recognizes a subset of fucosylated glycans and lipopolysaccharides. Plays a role in innate immunity through its ability to bind non-self sugars presented by microorganisms and to activate the complement through the recruitment of MAPS1. Also plays a role in apoptosis through its ability to bind in a calcium-independent manner the DNA present at the surface of apoptotic cells and to activate the complement in response to this binding. Finally, plays a role in development, probably serving as a guidance cue during the migration of neural crest cells and other cell types during embryogenesis. This is Collectin-11 (colec11) from Danio rerio (Zebrafish).